The following is a 365-amino-acid chain: Alanine racemase (365 aa).

Lys-32 functions as the Proton acceptor; specific for D-alanine in the catalytic mechanism. N6-(pyridoxal phosphate)lysine is present on Lys-32. Arg-128 lines the substrate pocket. Residue Tyr-257 is the Proton acceptor; specific for L-alanine of the active site. A substrate-binding site is contributed by Met-305.

Belongs to the alanine racemase family. The cofactor is pyridoxal 5'-phosphate.

It catalyses the reaction L-alanine = D-alanine. The protein operates within amino-acid biosynthesis; D-alanine biosynthesis; D-alanine from L-alanine: step 1/1. Functionally, catalyzes the interconversion of L-alanine and D-alanine. May also act on other amino acids. In Francisella tularensis subsp. tularensis (strain SCHU S4 / Schu 4), this protein is Alanine racemase (alr).